A 158-amino-acid chain; its full sequence is 6,7-dimethyl-8-ribityllumazine synthase (158 aa).

5-amino-6-(D-ribitylamino)uracil-binding positions include Phe24, 62 to 64 (CFE), and 86 to 88 (AVI). A (2S)-2-hydroxy-3-oxobutyl phosphate-binding site is contributed by 91–92 (DT). The active-site Proton donor is His94. Position 119 (Phe119) interacts with 5-amino-6-(D-ribitylamino)uracil. A (2S)-2-hydroxy-3-oxobutyl phosphate-binding site is contributed by Arg133.

This sequence belongs to the DMRL synthase family.

It carries out the reaction (2S)-2-hydroxy-3-oxobutyl phosphate + 5-amino-6-(D-ribitylamino)uracil = 6,7-dimethyl-8-(1-D-ribityl)lumazine + phosphate + 2 H2O + H(+). Its pathway is cofactor biosynthesis; riboflavin biosynthesis; riboflavin from 2-hydroxy-3-oxobutyl phosphate and 5-amino-6-(D-ribitylamino)uracil: step 1/2. Catalyzes the formation of 6,7-dimethyl-8-ribityllumazine by condensation of 5-amino-6-(D-ribitylamino)uracil with 3,4-dihydroxy-2-butanone 4-phosphate. This is the penultimate step in the biosynthesis of riboflavin. In Picosynechococcus sp. (strain ATCC 27264 / PCC 7002 / PR-6) (Agmenellum quadruplicatum), this protein is 6,7-dimethyl-8-ribityllumazine synthase.